Here is a 230-residue protein sequence, read N- to C-terminus: MYSIKMRSSNQDVHISGAETICEFDKIEQTVQRFYNKGFFHENGQPDFLNIKIQKIMEPIQQIKALQIIEDDKANLQHLTQECGVTEQALNQGMTYIKNETVYTGAIILSAISGKRLDSFGQRGIRATHFSFEDINNKGDLNERVTDALAIASCINAHPYVKGELCVSDDLTYTTGYFAAAKIGYHRLFDIKPVNTRYGGRIIFVDDCIDLNHYISFLESTPKQVVYETV.

It belongs to the BioW family. Homodimer. It depends on Mg(2+) as a cofactor.

The enzyme catalyses heptanedioate + ATP + CoA = 6-carboxyhexanoyl-CoA + AMP + diphosphate. Its pathway is metabolic intermediate metabolism; pimeloyl-CoA biosynthesis; pimeloyl-CoA from pimelate: step 1/1. Its function is as follows. Catalyzes the transformation of pimelate into pimeloyl-CoA with concomitant hydrolysis of ATP to AMP. The polypeptide is 6-carboxyhexanoate--CoA ligase (Staphylococcus aureus (strain Mu3 / ATCC 700698)).